Here is a 106-residue protein sequence, read N- to C-terminus: uncharacterized protein (106 aa).

2 helical membrane passes run 25-45 (VMNVVLNTLFSFVLAPYIHYI) and 62-82 (ICFLAKFSFLLVFLFYLNFQG).

The protein resides in the membrane. This is an uncharacterized protein from Saccharomyces cerevisiae (strain ATCC 204508 / S288c) (Baker's yeast).